Here is a 476-residue protein sequence, read N- to C-terminus: MAPVSLPPGFRFHPTDEELITYYLKRKINGQEIELEIIPEVDLYKCEPWDLPGKSLIPSKDQEWFFFSPRDRKYPNGSRTNRATKGGYWKATGKDRRVSWRDRAIGTKKTLVYYRGRAPHGIRTGWVMHEYRLDESECEPSAFGMQDAYALCRVFKKIVIEAKPRDQHQQQHQPYVHTSSNISGSSSFDVCSDLEISSNTPYNTAAHIQPRFGNANAISDHDDWSQYLSQNMPTSFSDYGSPYGPYLTQSKVNTEVQCEMFQHQMSLPPLRVENSQAQTSDFSKRLHQNSGQSGFDDFTFAASNSNQFYNSNVDDHLIHIGNLDEQSYIEEQELILPSFQSNDQDLELYGGSRTNTIDNIEIDDFFSFENQAQDNDNSNVTPNSAGFEMIGEEIIVNHKMLISTRQTTEILYYQVVPSQILKIHINPVHGNEERTMLMEEDSDDSWFQKAENVAKMKLKQISLVAKRYYKCLTIIF.

An NAC domain is found at 6-157; that stretch reads LPPGFRFHPT…AYALCRVFKK (152 aa). A DNA-binding region spans residues 105–163; the sequence is IGTKKTLVYYRGRAPHGIRTGWVMHEYRLDESECEPSAFGMQDAYALCRVFKKIVIEAK.

Expressed in a few sieve element cells before enucleation and in phloem-pole pericycle cells.

The protein resides in the nucleus. In terms of biological role, transcription factor directing sieve element enucleation and cytosol degradation. Not required for formation of lytic vacuoles. Regulates, with NAC045, the transcription of NEN1, NEN2, NEN3, NEN4, RTM1, RTM2, UBP16, PLDZETA, ABCB10 and At1g26450. The sequence is that of NAC domain-containing protein 86 from Arabidopsis thaliana (Mouse-ear cress).